An 882-amino-acid chain; its full sequence is DNA mismatch repair protein MutS (882 aa).

An ATP-binding site is contributed by 627–634 (GPNMAGKS).

Belongs to the DNA mismatch repair MutS family.

Functionally, this protein is involved in the repair of mismatches in DNA. It is possible that it carries out the mismatch recognition step. This protein has a weak ATPase activity. This is DNA mismatch repair protein MutS from Anaeromyxobacter dehalogenans (strain 2CP-1 / ATCC BAA-258).